We begin with the raw amino-acid sequence, 453 residues long: Growth/differentiation factor 9 (453 aa).

The signal sequence occupies residues 1 to 25 (MALPNKFFLWFCCFAWLCFPISLDS). The propeptide occupies 26–318 (QPSRGEAQIV…EGVRLSRHRR (293 aa)). 5 N-linked (GlcNAc...) asparagine glycosylation sites follow: asparagine 106, asparagine 163, asparagine 236, asparagine 255, and asparagine 269. Positions 281-300 (SLHPKRKPSQDPDQKRGLSA) are disordered. Asparagine 337 carries an N-linked (GlcNAc...) asparagine glycan. Intrachain disulfides connect cysteine 352–cysteine 418, cysteine 381–cysteine 450, and cysteine 385–cysteine 452.

This sequence belongs to the TGF-beta family. As to quaternary structure, homodimer or heterodimer (Potential). But, in contrast to other members of this family, cannot be disulfide-linked. In terms of processing, phosphorylated; phosphorylation is critical for GDF9 function.

The protein localises to the secreted. Required for ovarian folliculogenesis. This Bos taurus (Bovine) protein is Growth/differentiation factor 9 (GDF9).